The primary structure comprises 119 residues: Large ribosomal subunit protein bL19 (119 aa).

This sequence belongs to the bacterial ribosomal protein bL19 family.

Functionally, this protein is located at the 30S-50S ribosomal subunit interface and may play a role in the structure and function of the aminoacyl-tRNA binding site. This Photobacterium profundum (strain SS9) protein is Large ribosomal subunit protein bL19.